The primary structure comprises 108 residues: Mitochondrial pyruvate carrier 4 (108 aa).

A run of 3 helical transmembrane segments spans residues isoleucine 19–isoleucine 35, isoleucine 51–isoleucine 67, and leucine 74–alanine 90.

This sequence belongs to the mitochondrial pyruvate carrier (MPC) (TC 2.A.105) family.

It is found in the mitochondrion inner membrane. In terms of biological role, mediates the uptake of pyruvate into mitochondria. In Arabidopsis thaliana (Mouse-ear cress), this protein is Mitochondrial pyruvate carrier 4.